The following is an 878-amino-acid chain: DNA gyrase subunit A (878 aa).

The Topo IIA-type catalytic domain maps to 34–533 (LPDVRDGLKP…NSADINIEDL (500 aa)). Catalysis depends on Tyr122, which acts as the O-(5'-phospho-DNA)-tyrosine intermediate. The short motif at 560–566 (QRRGGKG) is the GyrA-box element. The tract at residues 844–878 (DDEELDAIDGSVAEGDEDIAPEAESDDDVADDADE) is disordered. Acidic residues predominate over residues 857–878 (EGDEDIAPEAESDDDVADDADE).

Belongs to the type II topoisomerase GyrA/ParC subunit family. Heterotetramer, composed of two GyrA and two GyrB chains. In the heterotetramer, GyrA contains the active site tyrosine that forms a transient covalent intermediate with DNA, while GyrB binds cofactors and catalyzes ATP hydrolysis.

Its subcellular location is the cytoplasm. It catalyses the reaction ATP-dependent breakage, passage and rejoining of double-stranded DNA.. Its function is as follows. A type II topoisomerase that negatively supercoils closed circular double-stranded (ds) DNA in an ATP-dependent manner to modulate DNA topology and maintain chromosomes in an underwound state, and also catalyzes the interconversion of other topological isomers of double-stranded DNA rings, including catenanes and knotted rings. Replenishes negative supercoiling downstream of highly transcribed genes to help control overall chromosomal supercoiling density. E.coli makes 15% more negative supercoils in pBR322 plasmid DNA than S.typhimurium; the S.typhimurium GyrB subunit is toxic in E.coli, while the E.coli copy can be expressed in S.typhimurium even though the 2 subunits have 777/804 residues identical. Negative supercoiling favors strand separation, and DNA replication, transcription, recombination and repair, all of which involve strand separation. Type II topoisomerases break and join 2 DNA strands simultaneously in an ATP-dependent manner. The chain is DNA gyrase subunit A from Salmonella typhimurium (strain LT2 / SGSC1412 / ATCC 700720).